Reading from the N-terminus, the 282-residue chain is Ribosomal RNA small subunit methyltransferase I (282 aa).

This sequence belongs to the methyltransferase superfamily. RsmI family.

Its subcellular location is the cytoplasm. The catalysed reaction is cytidine(1402) in 16S rRNA + S-adenosyl-L-methionine = 2'-O-methylcytidine(1402) in 16S rRNA + S-adenosyl-L-homocysteine + H(+). Catalyzes the 2'-O-methylation of the ribose of cytidine 1402 (C1402) in 16S rRNA. This chain is Ribosomal RNA small subunit methyltransferase I, found in Pseudomonas aeruginosa (strain ATCC 15692 / DSM 22644 / CIP 104116 / JCM 14847 / LMG 12228 / 1C / PRS 101 / PAO1).